The chain runs to 366 residues: MQRELVSFPLSPTVRVKLVAAGFQTAEDVLGVKPSELSKEVGISKEEALETLQIVRRESLTDKPRCAGASVAGKKYTALELLEQEHTQGFIITFCSALDNILGGGIPLMKTTEVCGVPGVGKTQLCMQLAVDVQIPECFGGVAGEAVFIDTEGSFMVDRVVTLANACIQHLHLIAGTHKDEEHQKALEGFTLENILSHIYYFRCHDYTELLAQVYLLPDFLSNHSKVQLVIIDGIALPFRHDLDDLSLRTRLLNGLAQQMISLANNHRLAVILTNQMTTKIDKNQALLVPALGESWGHAATIRLIFHWEQKQRFATLYKSPSQKESTIPFQITPQGFRDAAVTASSSQTEGSSNLRKRSREPEEGC.

Residues 1 to 117 (MQRELVSFPL…LMKTTEVCGV (117 aa)) are required for Holliday junction resolution activity. The residue at position 11 (Ser-11) is a Phosphoserine. The interaction with RAD51B, RAD51D and XRCC3 stretch occupies residues 70-127 (SVAGKKYTALELLEQEHTQGFIITFCSALDNILGGGIPLMKTTEVCGVPGVGKTQLCM). 116–123 (GVPGVGKT) contributes to the ATP binding site. The segment at 338-366 (RDAAVTASSSQTEGSSNLRKRSREPEEGC) is disordered. The span at 343-354 (TASSSQTEGSSN) shows a compositional bias: polar residues. A Nuclear localization signal motif is present at residues 356-360 (RKRSR).

This sequence belongs to the RecA family. RAD51 subfamily. Part of the RAD51 paralog protein complexes BCDX2 and CX3; the complexes have a ring-like structure arranged into a flat disc around a central channel. The BCDX2 complex consits of RAD51B, RAD51C, RAD51D and XRCC2; the CX3 complex consists of RAD51C and XRCC3. The BCDX2 subcomplex RAD51B:RAD51C interacts with RAD51. Interacts with SWSAP1; involved in homologous recombination repair. Interacts directly with PALB2 which may serve as a scaffold for a HR complex containing PALB2, BRCA2, RAD51C, RAD51 and XRCC3. Interacts with HELQ.

It localises to the nucleus. It is found in the cytoplasm. The protein localises to the perinuclear region. The protein resides in the mitochondrion. Essential for the homologous recombination (HR) pathway of DNA repair. Involved in the homologous recombination repair (HRR) pathway of double-stranded DNA breaks arising during DNA replication or induced by DNA-damaging agents. Part of the RAD51 paralog protein complexes BCDX2 and CX3 which act at different stages of the BRCA1-BRCA2-dependent HR pathway. Upon DNA damage, BCDX2 seems to act downstream of BRCA2 recruitment and upstream of RAD51 recruitment; CX3 seems to act downstream of RAD51 recruitment; both complexes bind predominantly to the intersection of the four duplex arms of the Holliday junction (HJ) and to junction of replication forks. The BCDX2 complex was originally reported to bind single-stranded DNA, single-stranded gaps in duplex DNA and specifically to nicks in duplex DNA. The BCDX2 subcomplex RAD51B:RAD51C exhibits single-stranded DNA-dependent ATPase activity suggesting an involvement in early stages of the HR pathway. Involved in RAD51 foci formation in response to DNA damage suggesting an involvement in early stages of HR probably in the invasion step. Has an early function in DNA repair in facilitating phosphorylation of the checkpoint kinase CHEK2 and thereby transduction of the damage signal, leading to cell cycle arrest and HR activation. Participates in branch migration and HJ resolution and thus is important for processing HR intermediates late in the DNA repair process; the function may be linked to the CX3 complex. Part of a PALB2-scaffolded HR complex containing BRCA2 and which is thought to play a role in DNA repair by HR. Protects RAD51 from ubiquitin-mediated degradation that is enhanced following DNA damage. Plays a role in regulating mitochondrial DNA copy number under conditions of oxidative stress in the presence of RAD51 and XRCC3. Contributes to DNA cross-link resistance, sister chromatid cohesion and genomic stability. Involved in maintaining centrosome number in mitosis. The protein is DNA repair protein RAD51 homolog 3 (RAD51C) of Cricetulus griseus (Chinese hamster).